A 320-amino-acid chain; its full sequence is Very-long-chain 3-oxoacyl-CoA reductase (320 aa).

A helical membrane pass occupies residues 17–37 (FWYLGVVAAVWWGLRAAWCLL). 56 to 85 (GKWAVVTGATDGIGKAYAEELAKRGMNIVL) serves as a coordination point for NADP(+). Helical transmembrane passes span 189–209 (GVILNISSASGMYPVPLLTVY) and 283–303 (AIMGWISTSLVPVSTAISLGM). Residue Ser-196 coordinates substrate. Tyr-209 acts as the Proton acceptor in catalysis.

Belongs to the short-chain dehydrogenases/reductases (SDR) family. 17-beta-HSD 3 subfamily.

Its subcellular location is the endoplasmic reticulum membrane. It carries out the reaction a very-long-chain (3R)-3-hydroxyacyl-CoA + NADP(+) = a very-long-chain 3-oxoacyl-CoA + NADPH + H(+). The catalysed reaction is 17beta-estradiol + NAD(+) = estrone + NADH + H(+). It catalyses the reaction 17beta-estradiol + NADP(+) = estrone + NADPH + H(+). The enzyme catalyses 3-oxooctadecanoyl-CoA + NADPH + H(+) = (3R)-hydroxyoctadecanoyl-CoA + NADP(+). It carries out the reaction (7Z,10Z,13Z,16Z)-3-oxodocosatetraenoyl-CoA + NADPH + H(+) = (3R)-hydroxy-(7Z,10Z,13Z,16Z)-docosatetraenoyl-CoA + NADP(+). The catalysed reaction is 3-oxo-(7Z,10Z,13Z,16Z,19Z)-docosapentaenoyl-CoA + NADPH + H(+) = (3R)-hydroxy-(7Z,10Z,13Z,16Z,19Z)-docosapentaenoyl-CoA + NADP(+). It catalyses the reaction (8Z,11Z,14Z)-3-oxoeicosatrienoyl-CoA + NADPH + H(+) = (3R)-hydroxy-(8Z,11Z,14Z)-eicosatrienoyl-CoA + NADP(+). The protein operates within lipid metabolism; fatty acid biosynthesis. It participates in steroid biosynthesis; estrogen biosynthesis. Functionally, catalyzes the second of the four reactions of the long-chain fatty acids elongation cycle. This endoplasmic reticulum-bound enzymatic process, allows the addition of two carbons to the chain of long- and very long-chain fatty acids/VLCFAs per cycle. This enzyme has a 3-ketoacyl-CoA reductase activity, reducing 3-ketoacyl-CoA to 3-hydroxyacyl-CoA, within each cycle of fatty acid elongation. Thereby, it may participate in the production of VLCFAs of different chain lengths that are involved in multiple biological processes as precursors of membrane lipids and lipid mediators. May also catalyze the transformation of estrone (E1) into estradiol (E2) and play a role in estrogen formation. This is Very-long-chain 3-oxoacyl-CoA reductase (hsd17b12) from Xenopus tropicalis (Western clawed frog).